The primary structure comprises 425 residues: Argininosuccinate synthase (425 aa).

ATP is bound by residues 7 to 15 (AYSGGLDTS) and Ala-33. Tyr-84 lines the L-citrulline pocket. Gly-114 provides a ligand contact to ATP. L-aspartate-binding residues include Thr-116, Asn-120, and Asp-121. Position 120 (Asn-120) interacts with L-citrulline. L-citrulline is bound by residues Arg-124, Ser-177, Ser-186, Glu-267, and Tyr-279.

The protein belongs to the argininosuccinate synthase family. Type 1 subfamily. In terms of assembly, homotetramer.

It is found in the cytoplasm. It carries out the reaction L-citrulline + L-aspartate + ATP = 2-(N(omega)-L-arginino)succinate + AMP + diphosphate + H(+). It functions in the pathway amino-acid biosynthesis; L-arginine biosynthesis; L-arginine from L-ornithine and carbamoyl phosphate: step 2/3. The chain is Argininosuccinate synthase from Pseudothermotoga lettingae (strain ATCC BAA-301 / DSM 14385 / NBRC 107922 / TMO) (Thermotoga lettingae).